The chain runs to 99 residues: Probable small ribosomal subunit protein cS23 (99 aa).

This sequence belongs to the chloroplast-specific ribosomal protein cS23 family. Part of the 30S ribosomal subunit.

In terms of biological role, probably a ribosomal protein or a ribosome-associated protein. This Synechococcus sp. (strain JA-2-3B'a(2-13)) (Cyanobacteria bacterium Yellowstone B-Prime) protein is Probable small ribosomal subunit protein cS23.